A 658-amino-acid chain; its full sequence is tRNA 5-methylaminomethyl-2-thiouridine biosynthesis bifunctional protein MnmC (658 aa).

Positions 1 to 236 are tRNA (mnm(5)s(2)U34)-methyltransferase; the sequence is MIPELPHAQL…KWEVLRGEFL (236 aa). The interval 265–658 is FAD-dependent cmnm(5)s(2)U34 oxidoreductase; it reads IGGGLAGCAS…ALRRLIRGKA (394 aa).

This sequence in the N-terminal section; belongs to the methyltransferase superfamily. tRNA (mnm(5)s(2)U34)-methyltransferase family. It in the C-terminal section; belongs to the DAO family. The cofactor is FAD.

The protein resides in the cytoplasm. It catalyses the reaction 5-aminomethyl-2-thiouridine(34) in tRNA + S-adenosyl-L-methionine = 5-methylaminomethyl-2-thiouridine(34) in tRNA + S-adenosyl-L-homocysteine + H(+). Functionally, catalyzes the last two steps in the biosynthesis of 5-methylaminomethyl-2-thiouridine (mnm(5)s(2)U) at the wobble position (U34) in tRNA. Catalyzes the FAD-dependent demodification of cmnm(5)s(2)U34 to nm(5)s(2)U34, followed by the transfer of a methyl group from S-adenosyl-L-methionine to nm(5)s(2)U34, to form mnm(5)s(2)U34. The sequence is that of tRNA 5-methylaminomethyl-2-thiouridine biosynthesis bifunctional protein MnmC from Pseudomonas fluorescens (strain ATCC BAA-477 / NRRL B-23932 / Pf-5).